We begin with the raw amino-acid sequence, 497 residues long: Cysteine--tRNA ligase (497 aa).

Residue cysteine 46 coordinates Zn(2+). A 'HIGH' region motif is present at residues 48–58 (PTVYSDAHLGH). Zn(2+)-binding residues include cysteine 237, histidine 262, and glutamate 266. A 'KMSKS' region motif is present at residues 293 to 297 (KMSKS). Lysine 296 serves as a coordination point for ATP.

It belongs to the class-I aminoacyl-tRNA synthetase family. Monomer. Requires Zn(2+) as cofactor.

The protein localises to the cytoplasm. It carries out the reaction tRNA(Cys) + L-cysteine + ATP = L-cysteinyl-tRNA(Cys) + AMP + diphosphate. The protein is Cysteine--tRNA ligase of Deinococcus geothermalis (strain DSM 11300 / CIP 105573 / AG-3a).